The sequence spans 459 residues: Cysteine--tRNA ligase (459 aa).

Cysteine 31 is a binding site for Zn(2+). The 'HIGH' region motif lies at 33 to 43 (PTVYDNPHIGN). Zn(2+)-binding residues include cysteine 216, histidine 241, and glutamate 245. A 'KMSKS' region motif is present at residues 274–278 (KMSKS). Position 277 (lysine 277) interacts with ATP.

Belongs to the class-I aminoacyl-tRNA synthetase family. Monomer. Zn(2+) serves as cofactor.

Its subcellular location is the cytoplasm. It catalyses the reaction tRNA(Cys) + L-cysteine + ATP = L-cysteinyl-tRNA(Cys) + AMP + diphosphate. This is Cysteine--tRNA ligase from Rickettsia felis (strain ATCC VR-1525 / URRWXCal2) (Rickettsia azadi).